The following is a 378-amino-acid chain: Putative glycosyltransferase ORF378 (378 aa).

The protein belongs to the glycosyltransferase group 1 family. Glycosyltransferase 4 subfamily.

The chain is Putative glycosyltransferase ORF378 from Acidianus sp. F28 (AFV-2).